A 301-amino-acid chain; its full sequence is Glycine--tRNA ligase alpha subunit (301 aa).

This sequence belongs to the class-II aminoacyl-tRNA synthetase family. Tetramer of two alpha and two beta subunits.

Its subcellular location is the cytoplasm. It carries out the reaction tRNA(Gly) + glycine + ATP = glycyl-tRNA(Gly) + AMP + diphosphate. The sequence is that of Glycine--tRNA ligase alpha subunit from Shewanella amazonensis (strain ATCC BAA-1098 / SB2B).